The chain runs to 201 residues: UPF0301 protein MAP_0045 (201 aa).

It belongs to the UPF0301 (AlgH) family.

The chain is UPF0301 protein MAP_0045 from Mycolicibacterium paratuberculosis (strain ATCC BAA-968 / K-10) (Mycobacterium paratuberculosis).